The primary structure comprises 382 residues: 6-oxocyclohex-1-ene-1-carbonyl-CoA hydrolase (382 aa).

Belongs to the enoyl-CoA hydratase/isomerase family. In terms of assembly, homohexamer.

The catalysed reaction is 6-oxocyclohex-1-ene-1-carbonyl-CoA + 2 H2O = 3-hydroxy-6-carboxyhexanoyl-CoA + H(+). It participates in aromatic compound metabolism; benzoyl-CoA degradation. Functionally, involved in the central benzoyl-CoA catabolism. Catalyzes the addition of one molecule of water to the double bond and the hydrolytic cleavage of C-C bond in the alicyclic ring, 6-oxocyclohex-1-ene-1-carbonyl-CoA (6-OCH-CoA) to yield 3-hydroxypimelyl-CoA. The sequence is that of 6-oxocyclohex-1-ene-1-carbonyl-CoA hydrolase from Syntrophus aciditrophicus (strain SB).